Reading from the N-terminus, the 269-residue chain is GTP cyclohydrolase FolE2 (269 aa).

The protein belongs to the GTP cyclohydrolase IV family.

It catalyses the reaction GTP + H2O = 7,8-dihydroneopterin 3'-triphosphate + formate + H(+). The protein operates within cofactor biosynthesis; 7,8-dihydroneopterin triphosphate biosynthesis; 7,8-dihydroneopterin triphosphate from GTP: step 1/1. Functionally, converts GTP to 7,8-dihydroneopterin triphosphate. The polypeptide is GTP cyclohydrolase FolE2 (Azoarcus sp. (strain BH72)).